The following is a 156-amino-acid chain: Transcription elongation factor GreA (156 aa).

Residues Tyr12–Ala72 adopt a coiled-coil conformation.

It belongs to the GreA/GreB family.

Functionally, necessary for efficient RNA polymerase transcription elongation past template-encoded arresting sites. The arresting sites in DNA have the property of trapping a certain fraction of elongating RNA polymerases that pass through, resulting in locked ternary complexes. Cleavage of the nascent transcript by cleavage factors such as GreA or GreB allows the resumption of elongation from the new 3'terminus. GreA releases sequences of 2 to 3 nucleotides. This is Transcription elongation factor GreA from Dehalococcoides mccartyi (strain ATCC BAA-2266 / KCTC 15142 / 195) (Dehalococcoides ethenogenes (strain 195)).